The sequence spans 291 residues: MAIQLPGFTMKNPLMPASGTFGFGEGYAKEYDLNLLGALVTKSTTLAPRIGNQGTIFADGPDSTLNAVGLKNPGSDVVLHEKLPWLATQYPDLPIIASIAGVDVAEYAAVAKKLSAAPNVKALEVNISCPNVKQGGMAFGTDPEVAAAVTRAVKAASSVPIFVKLTPNVTDITAIAKAVEQAGADGLSLINTFVGMRLDIATGKPLLDNVTGGVSGPALLPMALHMVYQVAHAVRVPLIGMGGISSGHDAAEMLAAGATALAVGSANYYQKRAIPKIAAELAAIQEGQTVL.

FMN-binding positions include S18 and 42–43; that span reads KS. Residues K42, 66–70, and N126 contribute to the substrate site; that span reads NAVGL. N126 contributes to the FMN binding site. C129 (nucleophile) is an active-site residue. Positions 164 and 190 each coordinate FMN. Position 191–192 (191–192) interacts with substrate; that stretch reads NT. Residues G216, 242 to 243, and 264 to 265 each bind FMN; these read GG and GS.

The protein belongs to the dihydroorotate dehydrogenase family. Type 1 subfamily. Homodimer. It depends on FMN as a cofactor.

The protein localises to the cytoplasm. It catalyses the reaction (S)-dihydroorotate + fumarate = orotate + succinate. It participates in pyrimidine metabolism; UMP biosynthesis via de novo pathway. Its function is as follows. Catalyzes the conversion of dihydroorotate to orotate with fumarate as the electron acceptor. This Lacticaseibacillus paracasei (strain ATCC 334 / BCRC 17002 / CCUG 31169 / CIP 107868 / KCTC 3260 / NRRL B-441) (Lactobacillus paracasei) protein is Dihydroorotate dehydrogenase A (fumarate) (pyrD).